The sequence spans 131 residues: Large ribosomal subunit protein bL21 (131 aa).

It belongs to the bacterial ribosomal protein bL21 family. As to quaternary structure, part of the 50S ribosomal subunit. Contacts protein L20.

This protein binds to 23S rRNA in the presence of protein L20. The chain is Large ribosomal subunit protein bL21 from Cereibacter sphaeroides (strain ATCC 17023 / DSM 158 / JCM 6121 / CCUG 31486 / LMG 2827 / NBRC 12203 / NCIMB 8253 / ATH 2.4.1.) (Rhodobacter sphaeroides).